Reading from the N-terminus, the 60-residue chain is MVHVLERALLEQQSSACGLPGSSTETRPSHPCPEDPDVSRLRLLLVVLCVLFGLLCLLLI.

Positions 14–26 (SSACGLPGSSTET) are enriched in polar residues. The tract at residues 14 to 34 (SSACGLPGSSTETRPSHPCPE) is disordered. Residues 41 to 59 (LRLLLVVLCVLFGLLCLLL) form a helical membrane-spanning segment.

This sequence belongs to the lymphocryptovirus BNLF2a family. Interacts with host TAP1 and TAP2.

It is found in the host endoplasmic reticulum membrane. In terms of biological role, participates in viral evasion from HLA class I-restricted T-cell immunity. Associates with host TAP1 and TAP2 and prevents TAP-mediated peptide transport and subsequent loading. The protein is Protein BNLF2a of Homo sapiens (Human).